A 156-amino-acid polypeptide reads, in one-letter code: Ribosome maturation factor RimP (156 aa).

It belongs to the RimP family.

It is found in the cytoplasm. In terms of biological role, required for maturation of 30S ribosomal subunits. This Prochlorococcus marinus (strain NATL1A) protein is Ribosome maturation factor RimP.